The sequence spans 330 residues: ATP-dependent Clp protease proteolytic subunit-related protein 3, chloroplastic (330 aa).

Residues 1–43 constitute a chloroplast transit peptide; the sequence is MASCLQASMNSLLPRSSSFSPHPPLSSNSSGRRNLKTFRYAFR. Residues 7–32 are disordered; that stretch reads ASMNSLLPRSSSFSPHPPLSSNSSGR. Positions 8–30 are enriched in low complexity; it reads SMNSLLPRSSSFSPHPPLSSNSS.

It belongs to the peptidase S14 family. Component of the chloroplastic Clp protease core complex which consist of at least 16 proteins: CLPP4 (3 copies), CLPP5 (3 copies), CLPR4 (2 copies), ClpP1 (1 copy), CLPP6 (1 copy), CLPR2 (1 copy), CLPT1 (1 copy), CLPT2 (1 copy) and 3 copies of CLPP3 and/or CLPR1 and/or CLPR3. The core complex is organized in two heptameric rings, one containing CLPP3,4,5,6 in a 1:2:3:1 ratio and the other CLPP1 and CLPR1,2,3,4 in a 3:1:1:1:1 ratio.

It is found in the plastid. It localises to the chloroplast. This Arabidopsis thaliana (Mouse-ear cress) protein is ATP-dependent Clp protease proteolytic subunit-related protein 3, chloroplastic.